A 193-amino-acid chain; its full sequence is Probable GTP-binding protein EngB (193 aa).

One can recognise an EngB-type G domain in the interval 19–188 (SVKEVCFMGR…HKQIFELFKA (170 aa)). Residues 27–34 (GRSNVGKS), 53–57 (GRTQL), 70–73 (DLPG), 136–139 (NKFD), and 167–169 (VSA) contribute to the GTP site. Ser-34 and Thr-55 together coordinate Mg(2+).

The protein belongs to the TRAFAC class TrmE-Era-EngA-EngB-Septin-like GTPase superfamily. EngB GTPase family. The cofactor is Mg(2+).

Its function is as follows. Necessary for normal cell division and for the maintenance of normal septation. The polypeptide is Probable GTP-binding protein EngB (Mycoplasma pneumoniae (strain ATCC 29342 / M129 / Subtype 1) (Mycoplasmoides pneumoniae)).